The following is a 149-amino-acid chain: Calmodulin (149 aa).

A2 carries the N-acetylalanine modification. EF-hand domains follow at residues E8–N43, P44–D79, D81–K116, and L117–K149. Positions 21, 23, 25, 27, 32, 57, 59, 61, 63, 68, 94, 96, 98, and 105 each coordinate Ca(2+). K116 carries the N6,N6,N6-trimethyllysine modification. 5 residues coordinate Ca(2+): D130, D132, D134, Q136, and E141.

The protein belongs to the calmodulin family. In terms of processing, the N-terminus is blocked.

Functionally, calmodulin mediates the control of a large number of enzymes, ion channels and other proteins by Ca(2+). Among the enzymes to be stimulated by the calmodulin-Ca(2+) complex are a number of protein kinases and phosphatases. The polypeptide is Calmodulin (Spinacia oleracea (Spinach)).